A 274-amino-acid chain; its full sequence is MQPLHGNCLIAYARHKYILTMVNGEYRYFNGGDLVFADASQIQVDKCVENFVLVSRDTLSLFLPMLKEEALKLHVHKKVPSLLVHHCTRDIPVFQEVAQLSQNKNLRYAEMLRKRALIFALLSVFLEDTQFIPLLLNVLQPNMRTRVCTVINNNIAHEWTLARIASELLMSPSLLKKKLREEGTSYSQLLTECRMQRALQLIVIYGVSIKRVAVSCGYHSVSYFIYVFRNYYGMTPTEYQERSAQELPNCGSAASMAAQGIFYGTDRSAEGIRL.

Positions 145–242 (TRVCTVINNN…GMTPTEYQER (98 aa)) constitute an HTH araC/xylS-type domain. 2 DNA-binding regions (H-T-H motif) span residues 162–183 (ARIA…REEG) and 209–232 (IKRV…RNYY).

As to quaternary structure, homodimer.

In terms of biological role, positively regulates the expression of about fifteen genes involved in acid resistance such as gadA, gadB and gadC. Depending on the conditions (growth phase and medium), can repress gadW. The protein is HTH-type transcriptional regulator GadX (gadX) of Escherichia coli O6:H1 (strain CFT073 / ATCC 700928 / UPEC).